Here is a 729-residue protein sequence, read N- to C-terminus: MLYKGDTLYLDWLEDGIAELVFDAPGSVNKLDTATVASLGEAIGVLEQQSDLKGLLLRSNKAAFIVGADITEFLSLFLVPEEQLSQWLHFANSVFNRLEDLPVPTIAAVNGYALGGGCECVLATDYRLATPDLRIGLPETKLGIMPGFGGSVRMPRMLGADSALEIIAAGKDVGADQALKIGLVDGVVKAEKLVEGAKAILRQAINGDLDWKAKRQPKLEPLKLSKIEATMSFTIAKGMVAQTAGKHYPAPITAVKTIEAAARFGREEALNLENKSFVPLAHTNEARALVGIFLNDQYVKGKAKKLTKDVETPKQAAVLGAGIMGGGIAYQSAWKGVPVVMKDINDKSLTLGMTEAAKLLNKQLERGKIDGLKLAGVISTIHPTLDYAGFDRVDVVVEAVVENPKVKKAVLAETEQKVRPDTVLASNTSTIPISELANALERPENFCGMHFFNPVHRMPLVEIIRGEKSSDETIAKVVAWASKMGKTPIVVNDCPGFFVNRVLFPYFAGFSQLLRDGADFRKIDKVMEKQFGWPMGPAYLLDVVGIDTAHHAQAVMAAGFPQRMQKDYRDAIDALFDANRFGQKNGLGFWRYKEDSKGKPKKEEDAAVDDLLAEVSQPKRDFSEEEIIARMMIPMVNEVVRCLEEGIIATPAEADMALVYGLGFPPFHGGAFRWLDTLGSAKYLDMAQQYQHLGPLYEVPEGLRNKARHNEPYYPQVEPARAVGDLKTA.

Positions 1–189 (MLYKGDTLYL…KIGLVDGVVK (189 aa)) are enoyl-CoA hydratase/isomerase. D296 contacts substrate. Residues 311–729 (ETPKQAAVLG…ARAVGDLKTA (419 aa)) form a 3-hydroxyacyl-CoA dehydrogenase region. NAD(+)-binding positions include M324, D343, 400–402 (VVE), K407, and S429. H450 (for 3-hydroxyacyl-CoA dehydrogenase activity) is an active-site residue. N453 contacts NAD(+). Residues N500 and Y660 each coordinate substrate.

In the N-terminal section; belongs to the enoyl-CoA hydratase/isomerase family. The protein in the C-terminal section; belongs to the 3-hydroxyacyl-CoA dehydrogenase family. Heterotetramer of two alpha chains (FadB) and two beta chains (FadA).

The enzyme catalyses a (3S)-3-hydroxyacyl-CoA + NAD(+) = a 3-oxoacyl-CoA + NADH + H(+). The catalysed reaction is a (3S)-3-hydroxyacyl-CoA = a (2E)-enoyl-CoA + H2O. It carries out the reaction a 4-saturated-(3S)-3-hydroxyacyl-CoA = a (3E)-enoyl-CoA + H2O. It catalyses the reaction (3S)-3-hydroxybutanoyl-CoA = (3R)-3-hydroxybutanoyl-CoA. The enzyme catalyses a (3Z)-enoyl-CoA = a 4-saturated (2E)-enoyl-CoA. The catalysed reaction is a (3E)-enoyl-CoA = a 4-saturated (2E)-enoyl-CoA. It participates in lipid metabolism; fatty acid beta-oxidation. Functionally, involved in the aerobic and anaerobic degradation of long-chain fatty acids via beta-oxidation cycle. Catalyzes the formation of 3-oxoacyl-CoA from enoyl-CoA via L-3-hydroxyacyl-CoA. It can also use D-3-hydroxyacyl-CoA and cis-3-enoyl-CoA as substrate. The chain is Fatty acid oxidation complex subunit alpha from Escherichia fergusonii (strain ATCC 35469 / DSM 13698 / CCUG 18766 / IAM 14443 / JCM 21226 / LMG 7866 / NBRC 102419 / NCTC 12128 / CDC 0568-73).